A 475-amino-acid chain; its full sequence is Ribulose bisphosphate carboxylase large chain (475 aa).

Positions 1–2 (MS) are excised as a propeptide. Proline 3 bears the N-acetylproline mark. Lysine 14 is modified (N6,N6,N6-trimethyllysine). Residues asparagine 123 and threonine 173 each contribute to the substrate site. The active-site Proton acceptor is the lysine 175. Residue lysine 177 coordinates substrate. Mg(2+)-binding residues include lysine 201, aspartate 203, and glutamate 204. N6-carboxylysine is present on lysine 201. The Proton acceptor role is filled by histidine 294. The substrate site is built by arginine 295, histidine 327, and serine 379.

Belongs to the RuBisCO large chain family. Type I subfamily. In terms of assembly, heterohexadecamer of 8 large chains and 8 small chains; disulfide-linked. The disulfide link is formed within the large subunit homodimers. Mg(2+) is required as a cofactor. Post-translationally, the disulfide bond which can form in the large chain dimeric partners within the hexadecamer appears to be associated with oxidative stress and protein turnover.

The protein localises to the plastid. Its subcellular location is the chloroplast. It carries out the reaction 2 (2R)-3-phosphoglycerate + 2 H(+) = D-ribulose 1,5-bisphosphate + CO2 + H2O. The catalysed reaction is D-ribulose 1,5-bisphosphate + O2 = 2-phosphoglycolate + (2R)-3-phosphoglycerate + 2 H(+). Functionally, ruBisCO catalyzes two reactions: the carboxylation of D-ribulose 1,5-bisphosphate, the primary event in carbon dioxide fixation, as well as the oxidative fragmentation of the pentose substrate in the photorespiration process. Both reactions occur simultaneously and in competition at the same active site. The protein is Ribulose bisphosphate carboxylase large chain of Piper cenocladum (Ant piper).